A 308-amino-acid chain; its full sequence is HTH-type transcriptional activator AllS (308 aa).

In terms of domain architecture, HTH lysR-type spans Phe2–Thr59. Residues Phe19–Lys38 constitute a DNA-binding region (H-T-H motif).

It belongs to the LysR transcriptional regulatory family.

Positive regulator essential for the expression of allD operon. Binds to the allD promoter. The chain is HTH-type transcriptional activator AllS (allS) from Salmonella typhi.